The following is a 316-amino-acid chain: Peroxidase 67 (316 aa).

Residues 1 to 19 (MLKVVLLMMIMMLASQSEA) form the signal peptide. The residue at position 20 (Gln20) is a Pyrrolidone carboxylic acid. 4 disulfide bridges follow: Cys30–Cys110, Cys63–Cys68, Cys116–Cys312, and Cys196–Cys221. The Proton acceptor role is filled by His61. Positions 62, 65, 67, 69, and 71 each coordinate Ca(2+). Residue Pro159 participates in substrate binding. Residue His189 coordinates heme b. Thr190 serves as a coordination point for Ca(2+). N-linked (GlcNAc...) asparagine glycosylation occurs at Asn205. Residues Asp236, Ser239, and Asp244 each contribute to the Ca(2+) site.

The protein belongs to the peroxidase family. Classical plant (class III) peroxidase subfamily. Heme b serves as cofactor. It depends on Ca(2+) as a cofactor.

It localises to the secreted. It catalyses the reaction 2 a phenolic donor + H2O2 = 2 a phenolic radical donor + 2 H2O. Functionally, removal of H(2)O(2), oxidation of toxic reductants, biosynthesis and degradation of lignin, suberization, auxin catabolism, response to environmental stresses such as wounding, pathogen attack and oxidative stress. These functions might be dependent on each isozyme/isoform in each plant tissue. In Arabidopsis thaliana (Mouse-ear cress), this protein is Peroxidase 67 (PER67).